Consider the following 400-residue polypeptide: uncharacterized protein (400 aa).

This is an uncharacterized protein from Saccharomyces cerevisiae (strain ATCC 204508 / S288c) (Baker's yeast).